Here is a 340-residue protein sequence, read N- to C-terminus: UPF0284 protein Saci_0020 (340 aa).

The protein belongs to the UPF0284 family.

The chain is UPF0284 protein Saci_0020 from Sulfolobus acidocaldarius (strain ATCC 33909 / DSM 639 / JCM 8929 / NBRC 15157 / NCIMB 11770).